Reading from the N-terminus, the 208-residue chain is 3-demethoxyubiquinol 3-hydroxylase (208 aa).

6 residues coordinate Fe cation: Glu-57, Glu-87, His-90, Glu-139, Glu-171, and His-174.

This sequence belongs to the COQ7 family. Fe cation is required as a cofactor.

It localises to the cell membrane. It carries out the reaction a 5-methoxy-2-methyl-3-(all-trans-polyprenyl)benzene-1,4-diol + AH2 + O2 = a 3-demethylubiquinol + A + H2O. Its pathway is cofactor biosynthesis; ubiquinone biosynthesis. Catalyzes the hydroxylation of 2-nonaprenyl-3-methyl-6-methoxy-1,4-benzoquinol during ubiquinone biosynthesis. This is 3-demethoxyubiquinol 3-hydroxylase from Burkholderia pseudomallei (strain 668).